We begin with the raw amino-acid sequence, 187 residues long: Protein McbG (187 aa).

The protein belongs to the pentapeptide repeat protein family.

Its function is as follows. Together with proteins McbE and McbF this protein causes immunity to the peptide antibiotic microcin B17 (MccB17), which inhibits DNA replication in Enterobacteriaceae by induction of the SOS repair system. McbG alone can provide some protection. This is Protein McbG (mcbG) from Escherichia coli.